A 100-amino-acid polypeptide reads, in one-letter code: Large ribosomal subunit protein uL23 (100 aa).

This sequence belongs to the universal ribosomal protein uL23 family. In terms of assembly, part of the 50S ribosomal subunit. Contacts protein L29, and trigger factor when it is bound to the ribosome.

Its function is as follows. One of the early assembly proteins it binds 23S rRNA. One of the proteins that surrounds the polypeptide exit tunnel on the outside of the ribosome. Forms the main docking site for trigger factor binding to the ribosome. The sequence is that of Large ribosomal subunit protein uL23 from Colwellia psychrerythraea (strain 34H / ATCC BAA-681) (Vibrio psychroerythus).